Reading from the N-terminus, the 460-residue chain is Elongation factor 1-alpha (460 aa).

Gly-2 is modified (n,N,N-trimethylglycine). Lys-3 carries the post-translational modification N6,N6-dimethyllysine; alternate. N6-methyllysine; alternate is present on Lys-3. One can recognise a tr-type G domain in the interval 5 to 240; the sequence is KLHVNVVVIG…DAIEPPVRPS (236 aa). The G1 stretch occupies residues 14–21; that stretch reads GHVDSGKS. GTP is bound at residue 14–21; sequence GHVDSGKS. At Lys-30 the chain carries N6-methyllysine. Positions 70 to 74 are G2; that stretch reads GITID. Lys-79 bears the N6,N6,N6-trimethyllysine mark. The G3 stretch occupies residues 91 to 94; sequence DAPG. Residues 91–95 and 153–156 each bind GTP; these read DAPGH and NKMD. The G4 stretch occupies residues 153–156; sequence NKMD. Residues 192–194 are G5; the sequence is SGW. An N6,N6-dimethyllysine; alternate modification is found at Lys-316. N6-methyllysine; alternate is present on Lys-316. N6-methyllysine is present on Lys-390.

This sequence belongs to the TRAFAC class translation factor GTPase superfamily. Classic translation factor GTPase family. EF-Tu/EF-1A subfamily.

It localises to the cytoplasm. Its function is as follows. This protein promotes the GTP-dependent binding of aminoacyl-tRNA to the A-site of ribosomes during protein biosynthesis. The polypeptide is Elongation factor 1-alpha (TEF1) (Schizophyllum commune (Split gill fungus)).